Consider the following 153-residue polypeptide: 6,7-dimethyl-8-ribityllumazine synthase (153 aa).

5-amino-6-(D-ribitylamino)uracil contacts are provided by residues Phe22, 56 to 58 (AFE), and 80 to 82 (CVI). 85–86 (AT) provides a ligand contact to (2S)-2-hydroxy-3-oxobutyl phosphate. The Proton donor role is filled by His88. Residue Phe113 participates in 5-amino-6-(D-ribitylamino)uracil binding. Position 127 (Arg127) interacts with (2S)-2-hydroxy-3-oxobutyl phosphate.

Belongs to the DMRL synthase family.

The enzyme catalyses (2S)-2-hydroxy-3-oxobutyl phosphate + 5-amino-6-(D-ribitylamino)uracil = 6,7-dimethyl-8-(1-D-ribityl)lumazine + phosphate + 2 H2O + H(+). The protein operates within cofactor biosynthesis; riboflavin biosynthesis; riboflavin from 2-hydroxy-3-oxobutyl phosphate and 5-amino-6-(D-ribitylamino)uracil: step 1/2. Its function is as follows. Catalyzes the formation of 6,7-dimethyl-8-ribityllumazine by condensation of 5-amino-6-(D-ribitylamino)uracil with 3,4-dihydroxy-2-butanone 4-phosphate. This is the penultimate step in the biosynthesis of riboflavin. This Endomicrobium trichonymphae protein is 6,7-dimethyl-8-ribityllumazine synthase.